An 86-amino-acid chain; its full sequence is Small ribosomal subunit protein uS17 (86 aa).

This sequence belongs to the universal ribosomal protein uS17 family. Part of the 30S ribosomal subunit.

Its function is as follows. One of the primary rRNA binding proteins, it binds specifically to the 5'-end of 16S ribosomal RNA. This chain is Small ribosomal subunit protein uS17, found in Bifidobacterium longum (strain DJO10A).